Here is a 219-residue protein sequence, read N- to C-terminus: Swarming motility regulation protein RssB (219 aa).

In terms of domain architecture, Response regulatory spans 2–116 (NILLVEDDLQ…ELISRVKAVN (115 aa)). Asp-51 bears the 4-aspartylphosphate mark. The ompR/PhoB-type DNA-binding region spans 124 to 218 (SQTWSLGALY…VRGIGYLLKK (95 aa)).

It is found in the cytoplasm. Functionally, member of the two-component regulatory system RssA/RssB involved in regulation of swarming motility which has been shown to be inhibited by saturated fatty acids. RssA/RssB regulates cellular fatty acid composition, hemolysin production and cell surface topography. RssA/RssB negatively regulates the activity of SlhBA. It can also act as a negative regulator for the control of the swarming initiation. RssB binds its own promoter. The protein is Swarming motility regulation protein RssB (rssB) of Serratia marcescens.